Reading from the N-terminus, the 416-residue chain is Serine/threonine-protein kinase 26 (416 aa).

Ala-2 carries the N-acetylalanine modification. A Phosphoserine modification is found at Ser-4. One can recognise a Protein kinase domain in the interval 24-274 (FTKLERIGKG…AKELLKHKFI (251 aa)). ATP contacts are provided by residues 30-38 (IGKGSFGEV) and Lys-53. The active-site Proton acceptor is the Asp-144. Thr-178 is modified (phosphothreonine; by autocatalysis). Positions 296-343 (AEGHSDEESDSEGSDSESSSRESNPHPEWSFTTVRKKPDPKKLQNGEE) are disordered. 5 positions are modified to phosphoserine: Ser-300, Ser-304, Ser-306, Ser-309, and Ser-325. 2 positions are modified to phosphothreonine: Thr-327 and Thr-328. Basic and acidic residues predominate over residues 331–340 (KKPDPKKLQN).

This sequence belongs to the protein kinase superfamily. STE Ser/Thr protein kinase family. STE20 subfamily. Homodimer. Interacts with PDCD10. Interacts with GOLGA2. Interacts with CTTNBP2NL. Interacts with RIPOR1 (via C-terminus); this interaction occurs in a PDCD10-dependent and Rho-independent manner. Interacts with PDCD10; this interaction is required for the association of STK26 with RIPOR1. Part of the core of STRIPAK complexes composed of PP2A catalytic and scaffolding subunits, the striatins (PP2A regulatory subunits), the striatin-associated proteins MOB4, STRIP1 and STRIP2, PDCD10 and members of the STE20 kinases, such as STK24 and STK26. Mg(2+) serves as cofactor.

Its subcellular location is the cytoplasm. It localises to the golgi apparatus. The enzyme catalyses L-seryl-[protein] + ATP = O-phospho-L-seryl-[protein] + ADP + H(+). It catalyses the reaction L-threonyl-[protein] + ATP = O-phospho-L-threonyl-[protein] + ADP + H(+). With respect to regulation, interaction with Golgi matrix protein GOLGA2 leads to autophosphorylation on Thr-178, possibly as a consequence of stabilization of dimer formation. May also be activated by C-terminal cleavage. Serine/threonine-protein kinase that acts as a mediator of cell growth. Modulates apoptosis. In association with STK24 negatively regulates Golgi reorientation in polarized cell migration upon RHO activation. Phosphorylates ATG4B at 'Ser-383', thereby increasing autophagic flux. Part of the striatin-interacting phosphatase and kinase (STRIPAK) complexes. STRIPAK complexes have critical roles in protein (de)phosphorylation and are regulators of multiple signaling pathways including Hippo, MAPK, nuclear receptor and cytoskeleton remodeling. Different types of STRIPAK complexes are involved in a variety of biological processes such as cell growth, differentiation, apoptosis, metabolism and immune regulation. In Mus musculus (Mouse), this protein is Serine/threonine-protein kinase 26.